The sequence spans 227 residues: 7-cyano-7-deazaguanine synthase (227 aa).

11–21 (VSGGMDSAALL) lines the ATP pocket. Zn(2+)-binding residues include C192, C200, C203, and C206.

It belongs to the QueC family. Zn(2+) serves as cofactor.

It catalyses the reaction 7-carboxy-7-deazaguanine + NH4(+) + ATP = 7-cyano-7-deazaguanine + ADP + phosphate + H2O + H(+). It functions in the pathway purine metabolism; 7-cyano-7-deazaguanine biosynthesis. Its function is as follows. Catalyzes the ATP-dependent conversion of 7-carboxy-7-deazaguanine (CDG) to 7-cyano-7-deazaguanine (preQ(0)). The sequence is that of 7-cyano-7-deazaguanine synthase from Persephonella marina (strain DSM 14350 / EX-H1).